The sequence spans 273 residues: Putative pyruvate, phosphate dikinase regulatory protein (273 aa).

An ADP-binding site is contributed by 153–160; sequence GISRTSKT.

The protein belongs to the pyruvate, phosphate/water dikinase regulatory protein family. PDRP subfamily.

The catalysed reaction is N(tele)-phospho-L-histidyl/L-threonyl-[pyruvate, phosphate dikinase] + ADP = N(tele)-phospho-L-histidyl/O-phospho-L-threonyl-[pyruvate, phosphate dikinase] + AMP + H(+). The enzyme catalyses N(tele)-phospho-L-histidyl/O-phospho-L-threonyl-[pyruvate, phosphate dikinase] + phosphate + H(+) = N(tele)-phospho-L-histidyl/L-threonyl-[pyruvate, phosphate dikinase] + diphosphate. Bifunctional serine/threonine kinase and phosphorylase involved in the regulation of the pyruvate, phosphate dikinase (PPDK) by catalyzing its phosphorylation/dephosphorylation. This chain is Putative pyruvate, phosphate dikinase regulatory protein, found in Rhizobium johnstonii (strain DSM 114642 / LMG 32736 / 3841) (Rhizobium leguminosarum bv. viciae).